The following is a 95-amino-acid chain: Small ribosomal subunit protein bS21 (95 aa).

Residues 56-95 (KLARKKMQREGLLPMKPKPVFGAGPGAGRGGPAAGPRGPR) are disordered. Positions 78–88 (AGPGAGRGGPA) are enriched in gly residues.

Belongs to the bacterial ribosomal protein bS21 family.

This chain is Small ribosomal subunit protein bS21, found in Nitrobacter winogradskyi (strain ATCC 25391 / DSM 10237 / CIP 104748 / NCIMB 11846 / Nb-255).